The chain runs to 242 residues: MVIIPAIDLKGGKCVRLLQGDFERVTVYSDHPVEMAKAWREKGAERLHLVDLDGSIAGNPRNAAIISQIVKSVGVPVEIGGGIRDISTIQRYLDMGVQWVILGTAALKDRSFVYNACDLFPGHVILGIDANNGKVAVEGWTEQSAITALELAISYENRGIAAVIYTDISRDGMQTGVNVEGTRVLAEAVDIPVIASGGVATLDDIKRLLPLEESGIAGVIIGKALYSGAIALEEAISLAKSS.

Asp-8 (proton acceptor) is an active-site residue. Asp-129 acts as the Proton donor in catalysis.

It belongs to the HisA/HisF family.

It localises to the cytoplasm. The catalysed reaction is 1-(5-phospho-beta-D-ribosyl)-5-[(5-phospho-beta-D-ribosylamino)methylideneamino]imidazole-4-carboxamide = 5-[(5-phospho-1-deoxy-D-ribulos-1-ylimino)methylamino]-1-(5-phospho-beta-D-ribosyl)imidazole-4-carboxamide. The protein operates within amino-acid biosynthesis; L-histidine biosynthesis; L-histidine from 5-phospho-alpha-D-ribose 1-diphosphate: step 4/9. In Syntrophus aciditrophicus (strain SB), this protein is 1-(5-phosphoribosyl)-5-[(5-phosphoribosylamino)methylideneamino] imidazole-4-carboxamide isomerase.